The following is a 269-amino-acid chain: Hdr-like menaquinol oxidoreductase iron-sulfur subunit 1 (269 aa).

The segment at residues 1 to 26 (MMSRRKFLLLTGAAAAGAILTPQISA) is a signal peptide (tat-type signal). Residues Cys52, Cys55, Cys72, Cys76, Cys118, Cys121, Cys126, Cys130, Cys150, Cys153, Cys156, Cys160, Cys194, Cys197, Cys215, and Cys219 each coordinate [4Fe-4S] cluster. A 4Fe-4S ferredoxin-type domain is found at 141 to 170 (GIVEIDMHRCIGCRYCMIACPYGARCFNFI).

Consists of five subunits: an integral membrane subunit, a cytochrome b-like subunit, a cytochrome c subunit and two iron-sulfur subunits. Requires [4Fe-4S] cluster as cofactor. Post-translationally, predicted to be exported by the Tat system. The position of the signal peptide cleavage has been experimentally proven.

The protein resides in the cell membrane. In terms of biological role, has menaquinol-oxidizing activity. HmeA, HmeB and HmeE subunits may together catalyze electron transfer from menaquinol to cytochrome c. The polypeptide is Hdr-like menaquinol oxidoreductase iron-sulfur subunit 1 (hmeA) (Archaeoglobus fulgidus (strain ATCC 49558 / DSM 4304 / JCM 9628 / NBRC 100126 / VC-16)).